The chain runs to 543 residues: MAELEQLLDESSSAKALVSLREGSLSNTLNEKNNLPKSQTTRGRSSYVSMETPTRSSKRSRLSCEDEERPIASRSPRRSQRVTTMPQKLTNVATPDKRVSQKIGLRLRNLLKLPKAHKWCIYEWFYSNIDRPLFEGDNDFCLCLKESFPNLKTRKLTRVEWGTIRRLMGKPRRCSSAFFAEERMALKQKRQKMRLLQQRKITDMSLCKDLPDEIPLPLVIGTKVTARLRGVHDGLFTGQIDAVDTSAATYRVTFDRNGLGTHTVPDYEVLSNEPHETMPISAFAQKQRPPRFQNFLTPPRGSYTGSTQSILMDNDPLFSQSPWRSKLTGTDGETLGGFPVKFLVQVTRLSKILMIKKEHIKHLKEMNTEAEKLKSYSMPIGLDLQKRYATTVLDLEQLNKDLNKVLHEVQQFCFELAPDQGMQPADQPSELRRRCEEESQDVLRQNNTLASGEPRVQNTELTQLISRLTALLLQIRCLAEGGDLNSFEFKSLTDSLNDIKSSIDDSNLSCFQDNVEIHVAHIQSGLSQLGNLHAFSANNTNRT.

Residues 21 to 82 form a disordered region; that stretch reads REGSLSNTLN…SRSPRRSQRV (62 aa). Positions 24-55 are enriched in polar residues; sequence SLSNTLNEKNNLPKSQTTRGRSSYVSMETPTR. A coiled-coil region spans residues 355-451; the sequence is IKKEHIKHLK…VLRQNNTLAS (97 aa).

This sequence belongs to the lin-9 family. In terms of assembly, component of the DREAM complex.

Its subcellular location is the nucleus. This Danio rerio (Zebrafish) protein is Protein lin-9 homolog (lin9).